A 295-amino-acid chain; its full sequence is Microcin B17-processing protein McbB (295 aa).

The protein resides in the cytoplasm. Necessary to process the inactive microcin B17 (McbA) precursor into the active peptide. The sequence is that of Microcin B17-processing protein McbB (mcbB) from Escherichia coli.